A 288-amino-acid polypeptide reads, in one-letter code: Lipoyl synthase (288 aa).

[4Fe-4S] cluster is bound by residues Cys-39, Cys-44, Cys-50, Cys-65, Cys-69, Cys-72, and Ser-276. The Radical SAM core domain occupies 51-265 (WGKGTATFMI…KETGLKKGFE (215 aa)).

It belongs to the radical SAM superfamily. Lipoyl synthase family. The cofactor is [4Fe-4S] cluster.

The protein resides in the cytoplasm. It carries out the reaction [[Fe-S] cluster scaffold protein carrying a second [4Fe-4S](2+) cluster] + N(6)-octanoyl-L-lysyl-[protein] + 2 oxidized [2Fe-2S]-[ferredoxin] + 2 S-adenosyl-L-methionine + 4 H(+) = [[Fe-S] cluster scaffold protein] + N(6)-[(R)-dihydrolipoyl]-L-lysyl-[protein] + 4 Fe(3+) + 2 hydrogen sulfide + 2 5'-deoxyadenosine + 2 L-methionine + 2 reduced [2Fe-2S]-[ferredoxin]. It participates in protein modification; protein lipoylation via endogenous pathway; protein N(6)-(lipoyl)lysine from octanoyl-[acyl-carrier-protein]: step 2/2. Catalyzes the radical-mediated insertion of two sulfur atoms into the C-6 and C-8 positions of the octanoyl moiety bound to the lipoyl domains of lipoate-dependent enzymes, thereby converting the octanoylated domains into lipoylated derivatives. This chain is Lipoyl synthase, found in Bacteroides fragilis (strain ATCC 25285 / DSM 2151 / CCUG 4856 / JCM 11019 / LMG 10263 / NCTC 9343 / Onslow / VPI 2553 / EN-2).